The sequence spans 265 residues: 3-methyl-2-oxobutanoate hydroxymethyltransferase (265 aa).

Mg(2+) is bound by residues D45 and D84. 3-methyl-2-oxobutanoate is bound by residues 45-46 (DS), D84, and K112. A Mg(2+)-binding site is contributed by E114. The active-site Proton acceptor is the E181.

This sequence belongs to the PanB family. As to quaternary structure, homodecamer; pentamer of dimers. It depends on Mg(2+) as a cofactor.

The protein resides in the cytoplasm. It catalyses the reaction 3-methyl-2-oxobutanoate + (6R)-5,10-methylene-5,6,7,8-tetrahydrofolate + H2O = 2-dehydropantoate + (6S)-5,6,7,8-tetrahydrofolate. The protein operates within cofactor biosynthesis; (R)-pantothenate biosynthesis; (R)-pantoate from 3-methyl-2-oxobutanoate: step 1/2. Catalyzes the reversible reaction in which hydroxymethyl group from 5,10-methylenetetrahydrofolate is transferred onto alpha-ketoisovalerate to form ketopantoate. The chain is 3-methyl-2-oxobutanoate hydroxymethyltransferase from Yersinia pestis bv. Antiqua (strain Antiqua).